Consider the following 243-residue polypeptide: Carboxy-S-adenosyl-L-methionine synthase (243 aa).

Residues Y39, 64-66 (GCS), 89-90 (DN), 117-118 (DL), N132, and R199 contribute to the S-adenosyl-L-methionine site.

Belongs to the class I-like SAM-binding methyltransferase superfamily. Cx-SAM synthase family. Homodimer.

The enzyme catalyses prephenate + S-adenosyl-L-methionine = carboxy-S-adenosyl-L-methionine + 3-phenylpyruvate + H2O. Functionally, catalyzes the conversion of S-adenosyl-L-methionine (SAM) to carboxy-S-adenosyl-L-methionine (Cx-SAM). This chain is Carboxy-S-adenosyl-L-methionine synthase, found in Pseudoalteromonas atlantica (strain T6c / ATCC BAA-1087).